Reading from the N-terminus, the 239-residue chain is Ubiquinone biosynthesis O-methyltransferase (239 aa).

4 residues coordinate S-adenosyl-L-methionine: Arg44, Gly63, Asp84, and Met128.

The protein belongs to the methyltransferase superfamily. UbiG/COQ3 family.

It catalyses the reaction a 3-demethylubiquinol + S-adenosyl-L-methionine = a ubiquinol + S-adenosyl-L-homocysteine + H(+). It carries out the reaction a 3-(all-trans-polyprenyl)benzene-1,2-diol + S-adenosyl-L-methionine = a 2-methoxy-6-(all-trans-polyprenyl)phenol + S-adenosyl-L-homocysteine + H(+). It participates in cofactor biosynthesis; ubiquinone biosynthesis. Functionally, O-methyltransferase that catalyzes the 2 O-methylation steps in the ubiquinone biosynthetic pathway. The sequence is that of Ubiquinone biosynthesis O-methyltransferase from Xanthomonas euvesicatoria pv. vesicatoria (strain 85-10) (Xanthomonas campestris pv. vesicatoria).